We begin with the raw amino-acid sequence, 238 residues long: ATP synthase subunit a (238 aa).

5 helical membrane passes run 18–38, 76–96, 114–134, 166–186, and 193–213; these read LTLL…VFWA, YSLL…LGLF, NLAF…IEGV, SLAI…GLIV, and VYWW…SVFI.

It belongs to the ATPase A chain family. In terms of assembly, F-type ATPases have 2 components, CF(1) - the catalytic core - and CF(0) - the membrane proton channel. CF(1) has five subunits: alpha(3), beta(3), gamma(1), delta(1), epsilon(1). CF(0) has three main subunits: a(1), b(2) and c(9-12). The alpha and beta chains form an alternating ring which encloses part of the gamma chain. CF(1) is attached to CF(0) by a central stalk formed by the gamma and epsilon chains, while a peripheral stalk is formed by the delta and b chains.

The protein localises to the cell membrane. Its function is as follows. Key component of the proton channel; it plays a direct role in the translocation of protons across the membrane. This chain is ATP synthase subunit a, found in Streptococcus pyogenes serotype M5 (strain Manfredo).